A 218-amino-acid chain; its full sequence is NAD(P)H-quinone oxidoreductase subunit I (218 aa).

2 4Fe-4S ferredoxin-type domains span residues 55-84 and 95-124; these read GRIH…VDWV and RNYS…MTEE. Residues cysteine 64, cysteine 67, cysteine 70, cysteine 74, cysteine 104, cysteine 107, cysteine 110, and cysteine 114 each coordinate [4Fe-4S] cluster. The tract at residues 168–218 is disordered; it reads EVQPHGVDPSRPRAGQRPDQVLSSLKQNAGGSAGNEGESATSTNTSKGSAE. Over residues 208-218 the composition is skewed to polar residues; sequence TSTNTSKGSAE.

This sequence belongs to the complex I 23 kDa subunit family. As to quaternary structure, NDH-1 is composed of at least 11 different subunits. The cofactor is [4Fe-4S] cluster.

The protein resides in the cellular thylakoid membrane. The catalysed reaction is a plastoquinone + NADH + (n+1) H(+)(in) = a plastoquinol + NAD(+) + n H(+)(out). It catalyses the reaction a plastoquinone + NADPH + (n+1) H(+)(in) = a plastoquinol + NADP(+) + n H(+)(out). In terms of biological role, NDH-1 shuttles electrons from an unknown electron donor, via FMN and iron-sulfur (Fe-S) centers, to quinones in the respiratory and/or the photosynthetic chain. The immediate electron acceptor for the enzyme in this species is believed to be plastoquinone. Couples the redox reaction to proton translocation, and thus conserves the redox energy in a proton gradient. The protein is NAD(P)H-quinone oxidoreductase subunit I of Synechococcus sp. (strain WH7803).